The sequence spans 325 residues: Hydroxylase/desaturase poxK (325 aa).

Residues 1–12 are compositionally biased toward low complexity; sequence MTATATPVPTVA. The interval 1 to 25 is disordered; it reads MTATATPVPTVASHAQDITLPPPPK.

The protein belongs to the asaB hydroxylase/desaturase family.

It functions in the pathway secondary metabolite biosynthesis. In terms of biological role, hydroxylase/desaturase; part of the gene cluster that mediates the biosynthesis of oxaleimides, cytotoxic compounds containing an unusual disubstituted succinimide moiety. The first step of the pathway is provided by the HR-PKS poxF that serves in a new mode of collaborative biosynthesis with the PKS-NRPS poxE, by providing the olefin containing amino acid substrate via the synthesis of an ACP-bound dec-4-enoate. The cytochrome P450 monooxygenase poxM-catalyzed oxidation at the alpha-position creates the enzyme-bound 2-hydroxydec-4-enoyl-ACP thioester, which may be prone to spontaneous hydrolysis to yield 2-hydroxydec-4-enoic acid due to increased electrophilicity of the carbonyl. 2-hydroxydec-4-enoic acid can then be further oxidized by poxM to yield the alpha-ketoacid 2-oxodec-4-enoicacid, which is reductively aminated by the aminotransferase poxL to yield (S,E)-2-aminodec-4-enoic acid. The Hybrid PKS-NRPS synthetase poxE then performs condensation between the octaketide product of its PKS modules and the amino group of (S,E)-2-aminodec-4-enoic acid which is activated and incorporated by the adenylation domain. The resulting aminoacyl product can be cyclized by the Diels-Alderase PoxQ and reductively released by the reductive (R) domain of poxE to yield an aldehyde intermediate. The released aldehyde is then substrate for a Knoevenagel condensation by the hydrolyase poxO followed by an oxidation at the 5-position of the pyrrolidone ring. The presence of the olefin from the amino acid building block allows for migration of the substituted allyl group to occur. This allylic transposition reaction takes place in a conjugate addition, semipinacol-like fashion to yield a succinimide intermediate. Iterative two-electron oxidations of the C7 methyl of the succinimide intermediate to the carboxylic acid can be catalyzed by one of two remaining cytochrome P450 monooxygenasess poxC or poxD to yield oxaleimide A. Subsequent oxidation yields the maleimide scaffold oxaleimide I. Both oxaleimide A and oxaleimide I can undergo oxidative modifications in the decalin ring to yield the series of products oxaleimides B to H. This Penicillium oxalicum protein is Hydroxylase/desaturase poxK.